The chain runs to 336 residues: Glyceraldehyde-3-phosphate dehydrogenase (336 aa).

Residues 12–13, D35, R79, and S121 contribute to the NAD(+) site; that span reads RI. D-glyceraldehyde 3-phosphate is bound by residues 152–154 and T183; that span reads SCT. C153 (nucleophile) is an active-site residue. N184 provides a ligand contact to NAD(+). Residues R198, 211-212, and R234 contribute to the D-glyceraldehyde 3-phosphate site; that span reads TG. NAD(+) is bound at residue N317.

This sequence belongs to the glyceraldehyde-3-phosphate dehydrogenase family. Homotetramer.

Its subcellular location is the cytoplasm. It carries out the reaction D-glyceraldehyde 3-phosphate + phosphate + NAD(+) = (2R)-3-phospho-glyceroyl phosphate + NADH + H(+). It functions in the pathway carbohydrate degradation; glycolysis; pyruvate from D-glyceraldehyde 3-phosphate: step 1/5. Resistant to pentalenolactone. In terms of biological role, catalyzes the oxidative phosphorylation of glyceraldehyde 3-phosphate (G3P) to 1,3-bisphosphoglycerate (BPG) using the cofactor NAD. The first reaction step involves the formation of a hemiacetal intermediate between G3P and a cysteine residue, and this hemiacetal intermediate is then oxidized to a thioester, with concomitant reduction of NAD to NADH. The reduced NADH is then exchanged with the second NAD, and the thioester is attacked by a nucleophilic inorganic phosphate to produce BPG. In Streptomyces coelicolor (strain ATCC BAA-471 / A3(2) / M145), this protein is Glyceraldehyde-3-phosphate dehydrogenase (gap).